Consider the following 255-residue polypeptide: Acetylglutamate kinase (255 aa).

Residues 40 to 41 (GG), Arg-62, and Asn-153 each bind substrate.

The protein belongs to the acetylglutamate kinase family. ArgB subfamily.

It is found in the cytoplasm. The enzyme catalyses N-acetyl-L-glutamate + ATP = N-acetyl-L-glutamyl 5-phosphate + ADP. Its pathway is amino-acid biosynthesis; L-arginine biosynthesis; N(2)-acetyl-L-ornithine from L-glutamate: step 2/4. Its function is as follows. Catalyzes the ATP-dependent phosphorylation of N-acetyl-L-glutamate. The chain is Acetylglutamate kinase from Bacillus anthracis (strain CDC 684 / NRRL 3495).